Reading from the N-terminus, the 235-residue chain is MGQKSNPIGLRLQVNRTWDSRWFAEGEDYGRMLVEDLKIRQYVFKALPQAAISKVVIERPAKLCRVSIYAARPGVIIGKKGADIEKLRKKLGEMTGSDVSLNIVEIRKPEVDAKLVAQGIADQLERRVAFRRAMKRAVQSAMRLGAEGIRINCAGRLGGAEIARTEWYREGRVPLHTLRANVDYAEAEAHTAYGVCGIKVWIFKGEILGHDPMATDRLMLDAQTTGVRPAREDRR.

A KH type-2 domain is found at 39 to 107 (IRQYVFKALP…DVSLNIVEIR (69 aa)).

It belongs to the universal ribosomal protein uS3 family. In terms of assembly, part of the 30S ribosomal subunit. Forms a tight complex with proteins S10 and S14.

In terms of biological role, binds the lower part of the 30S subunit head. Binds mRNA in the 70S ribosome, positioning it for translation. In Sphingopyxis alaskensis (strain DSM 13593 / LMG 18877 / RB2256) (Sphingomonas alaskensis), this protein is Small ribosomal subunit protein uS3.